Consider the following 619-residue polypeptide: Adagio protein 3 (619 aa).

Positions 44–123 (VGMFYYPMTP…SEIRRCLEEG (80 aa)) constitute a PAS domain. Position 91 is an S-4a-FMN cysteine (cysteine 91). Residues 127–168 (QGELLNFRKDGTPLVNRLRLAPIRDDDGTITHVIGIQVFSET) form the PAC domain. The region spanning 211-257 (ILQLSDEVLAHNILSRLTPRDVASIGSACRRLRQLTKNESVRKMVCQ) is the F-box domain. 5 Kelch repeats span residues 304-354 (SRCN…TSSP), 357-404 (RWGH…AGGT), 409-457 (RSWH…PTSW), 462-513 (RLGH…ECSA), and 523-571 (RLDH…NVPG).

This sequence belongs to the ADAGIO family. Interacts with ADO1 (via Kelch repeats), ADO2 (via Kelch repeats), SKP1A/ASK1, SKP1B/ASK2, ASK3, SKP1K/ASK11, ASK12, ASK13 and SKP1N/ASK14. Interacts (via Kelch repeats) with CDF1, CDF2 and CDF3. Interacts (via N-terminus) with CO and GI (via N-terminus) in a blue-light-dependent manner. In terms of processing, FMN binds covalently to cysteine after exposure to blue light and is reversed in the dark. Highly expressed in stomata and leaves and to a lower extent in seeds, roots, rosettes, stems and siliques. Also present in sepals and anther filaments.

It localises to the nucleus. Its subcellular location is the cytoplasm. It functions in the pathway protein modification; protein ubiquitination. Functionally, component of an E3 ubiquitin ligase complex that plays a central role in blue light-dependent circadian cycles. Acts as a blue light photoreceptor, due to the presence of FMN, that mediates light-regulated protein degradation of critical clock components by targeting them to the proteasome complex. The SCF(ADO3) E3 ubiquitin ligase complex is involved in the regulation of circadian clock-dependent processes including transition to flowering time, hypocotyl elongation, cotyledons and leaf movement rhythms. Forms a complex with 'GIGANTEA' (GI) to regulate 'CONSTANS' (CO) expression. Promotes CO expression during the light period of long days by decreasing the stability of CDF1 and CDF2 and by interacting directly with the CO protein and stabilizing it. ADO3 function is mainly GI dependent. Does not act as a regulator of CDF1 transcription. The interactions of ADO1/ZTL and ADO2 with ADO3 prevent its interaction with CDF1. The protein is Adagio protein 3 (ADO3) of Arabidopsis thaliana (Mouse-ear cress).